The sequence spans 715 residues: Fatty acid oxidation complex subunit alpha (715 aa).

Positions M1–P190 are enoyl-CoA hydratase. Positions G306–N715 are 3-hydroxyacyl-CoA dehydrogenase.

In the N-terminal section; belongs to the enoyl-CoA hydratase/isomerase family. The protein in the central section; belongs to the 3-hydroxyacyl-CoA dehydrogenase family. Heterotetramer of two alpha chains (FadJ) and two beta chains (FadI).

Its subcellular location is the cytoplasm. The enzyme catalyses a (3S)-3-hydroxyacyl-CoA = a (2E)-enoyl-CoA + H2O. It carries out the reaction a 4-saturated-(3S)-3-hydroxyacyl-CoA = a (3E)-enoyl-CoA + H2O. The catalysed reaction is a (3S)-3-hydroxyacyl-CoA + NAD(+) = a 3-oxoacyl-CoA + NADH + H(+). It catalyses the reaction (3S)-3-hydroxybutanoyl-CoA = (3R)-3-hydroxybutanoyl-CoA. It participates in lipid metabolism; fatty acid beta-oxidation. Catalyzes the formation of a hydroxyacyl-CoA by addition of water on enoyl-CoA. Also exhibits 3-hydroxyacyl-CoA epimerase and 3-hydroxyacyl-CoA dehydrogenase activities. In Salmonella paratyphi B (strain ATCC BAA-1250 / SPB7), this protein is Fatty acid oxidation complex subunit alpha.